The primary structure comprises 128 residues: uncharacterized protein (128 aa).

The span at 1–28 (MDADDFGKKDLENGNESPKKPIFMKDWK) shows a compositional bias: basic and acidic residues. The interval 1 to 30 (MDADDFGKKDLENGNESPKKPIFMKDWKNS) is disordered.

Its subcellular location is the cytoplasm. The protein resides in the nucleus. This is an uncharacterized protein from Schizosaccharomyces pombe (strain 972 / ATCC 24843) (Fission yeast).